Reading from the N-terminus, the 39-residue chain is Photosystem II reaction center protein L (39 aa).

A helical membrane pass occupies residues 18–38 (SLYLGLLSVFVLGILFSSYFF).

Belongs to the PsbL family. In terms of assembly, PSII is composed of 1 copy each of membrane proteins PsbA, PsbB, PsbC, PsbD, PsbE, PsbF, PsbH, PsbI, PsbJ, PsbK, PsbL, PsbM, PsbT, PsbX, PsbY, Psb30/Ycf12, peripheral proteins PsbO, CyanoQ (PsbQ), PsbU, PsbV and a large number of cofactors. It forms dimeric complexes.

The protein localises to the cellular thylakoid membrane. In terms of biological role, one of the components of the core complex of photosystem II (PSII). PSII is a light-driven water:plastoquinone oxidoreductase that uses light energy to abstract electrons from H(2)O, generating O(2) and a proton gradient subsequently used for ATP formation. It consists of a core antenna complex that captures photons, and an electron transfer chain that converts photonic excitation into a charge separation. This subunit is found at the monomer-monomer interface and is required for correct PSII assembly and/or dimerization. This chain is Photosystem II reaction center protein L, found in Prochlorococcus marinus (strain MIT 9301).